Consider the following 682-residue polypeptide: MISSYGDVDMELRDEDLILEEVRDYLTAYLRNIHQEDIILDNERVVVDLNQLYNYGLMEFVEFLINNPQKGIDFIKECYNDAYYTLRNEYPTNVIIAVKNLPKIFKTTRKGKIFTIEDIRSKTLGKLVEFEGIIVMASKIRPMLKKAYYICPKCGREVVREIDILNTDSEKAVCECGAELNLIEHKSIYTDFQEIKVQQPLDLMENPEEPPKYITVFLENSPGIYAGRVKITGIPIKVKKSKKLPIYDIHVKALHCEVLDGEVKIKLTNSDIENIKKIAKRKDVVNILADRLIPEIKGHSAIKKAVLLQQIKGVKKPGKRADIHILLITDPGIGKTVILRKIAEIPGNLYGSVTTATGVGLTAAVVREKTEIGEDTWVIKPGLLVKAHKGTACIDELTVNKELQSYVLEAMESQTIHISKGGINAKLPAECAILAACNPRWGRFNPEVSVAEQINIPAPLLSRFDLIFPIRDVSDKDKDKDIAEYIVDLHRAYLDEKINREMGLDYLEVDGVKIDKEFIIKYIYYARQKKPIISEKAKELFVNYYVEMRKKHQITARQLEAAIRIAEAHAKAKLKDVVDEEDAKEAINIITECLKEIAYDPETGIFDVDKILGVSKKERDKLTTVYEIIKELSEKSELVEHEDIAEEAKKKGIKEDELENIIKKLIKYGDIDEPKPGRYRLL.

Residues Val284 to Val487 enclose the MCM domain. An ATP-binding site is contributed by Thr329–Thr336.

It belongs to the MCM family.

This is an uncharacterized protein from Methanocaldococcus jannaschii (strain ATCC 43067 / DSM 2661 / JAL-1 / JCM 10045 / NBRC 100440) (Methanococcus jannaschii).